We begin with the raw amino-acid sequence, 499 residues long: UDP-N-acetylmuramoyl-L-alanyl-D-glutamate--2,6-diaminopimelate ligase (499 aa).

Leucine 30 and serine 32 together coordinate UDP-N-acetyl-alpha-D-muramoyl-L-alanyl-D-glutamate. 122-128 provides a ligand contact to ATP; that stretch reads GTNGKTT. UDP-N-acetyl-alpha-D-muramoyl-L-alanyl-D-glutamate contacts are provided by residues 164–165, serine 191, glutamine 197, and arginine 199; that span reads TT. Lysine 231 is subject to N6-carboxylysine. Meso-2,6-diaminopimelate contacts are provided by residues arginine 397, 421 to 424, glycine 472, and glutamate 476; that span reads DNPR. Positions 421 to 424 match the Meso-diaminopimelate recognition motif motif; the sequence is DNPR.

Belongs to the MurCDEF family. MurE subfamily. It depends on Mg(2+) as a cofactor. Carboxylation is probably crucial for Mg(2+) binding and, consequently, for the gamma-phosphate positioning of ATP.

It is found in the cytoplasm. The enzyme catalyses UDP-N-acetyl-alpha-D-muramoyl-L-alanyl-D-glutamate + meso-2,6-diaminopimelate + ATP = UDP-N-acetyl-alpha-D-muramoyl-L-alanyl-gamma-D-glutamyl-meso-2,6-diaminopimelate + ADP + phosphate + H(+). Its pathway is cell wall biogenesis; peptidoglycan biosynthesis. In terms of biological role, catalyzes the addition of meso-diaminopimelic acid to the nucleotide precursor UDP-N-acetylmuramoyl-L-alanyl-D-glutamate (UMAG) in the biosynthesis of bacterial cell-wall peptidoglycan. The chain is UDP-N-acetylmuramoyl-L-alanyl-D-glutamate--2,6-diaminopimelate ligase from Blochmanniella floridana.